Reading from the N-terminus, the 109-residue chain is Large ribosomal subunit protein uL24 (109 aa).

This sequence belongs to the universal ribosomal protein uL24 family. As to quaternary structure, part of the 50S ribosomal subunit.

In terms of biological role, one of two assembly initiator proteins, it binds directly to the 5'-end of the 23S rRNA, where it nucleates assembly of the 50S subunit. Functionally, one of the proteins that surrounds the polypeptide exit tunnel on the outside of the subunit. This chain is Large ribosomal subunit protein uL24, found in Rickettsia canadensis (strain McKiel).